The sequence spans 171 residues: Peptide methionine sulfoxide reductase MsrA (171 aa).

The active site involves Cys12.

It belongs to the MsrA Met sulfoxide reductase family.

The catalysed reaction is L-methionyl-[protein] + [thioredoxin]-disulfide + H2O = L-methionyl-(S)-S-oxide-[protein] + [thioredoxin]-dithiol. The enzyme catalyses [thioredoxin]-disulfide + L-methionine + H2O = L-methionine (S)-S-oxide + [thioredoxin]-dithiol. In terms of biological role, has an important function as a repair enzyme for proteins that have been inactivated by oxidation. Catalyzes the reversible oxidation-reduction of methionine sulfoxide in proteins to methionine. In Leuconostoc mesenteroides subsp. mesenteroides (strain ATCC 8293 / DSM 20343 / BCRC 11652 / CCM 1803 / JCM 6124 / NCDO 523 / NBRC 100496 / NCIMB 8023 / NCTC 12954 / NRRL B-1118 / 37Y), this protein is Peptide methionine sulfoxide reductase MsrA.